We begin with the raw amino-acid sequence, 386 residues long: Bifunctional enzyme IspD/IspF (386 aa).

The interval 1 to 225 (MYNFVTLSIL…SCLSAPSSDT (225 aa)) is 2-C-methyl-D-erythritol 4-phosphate cytidylyltransferase. Residues 226–386 (LSGVGFDVHA…NLKYFDWTKI (161 aa)) are 2-C-methyl-D-erythritol 2,4-cyclodiphosphate synthase. Aspartate 232 and histidine 234 together coordinate a divalent metal cation. Residues 232-234 (DVH) and 258-259 (HS) contribute to the 4-CDP-2-C-methyl-D-erythritol 2-phosphate site. Histidine 266 contacts a divalent metal cation. Residues 280-282 (DIG), 285-289 (FPDND), 356-359 (TTTE), phenylalanine 363, and arginine 366 each bind 4-CDP-2-C-methyl-D-erythritol 2-phosphate.

It in the N-terminal section; belongs to the IspD/TarI cytidylyltransferase family. IspD subfamily. The protein in the C-terminal section; belongs to the IspF family. It depends on a divalent metal cation as a cofactor.

It carries out the reaction 2-C-methyl-D-erythritol 4-phosphate + CTP + H(+) = 4-CDP-2-C-methyl-D-erythritol + diphosphate. The enzyme catalyses 4-CDP-2-C-methyl-D-erythritol 2-phosphate = 2-C-methyl-D-erythritol 2,4-cyclic diphosphate + CMP. It functions in the pathway isoprenoid biosynthesis; isopentenyl diphosphate biosynthesis via DXP pathway; isopentenyl diphosphate from 1-deoxy-D-xylulose 5-phosphate: step 2/6. Its pathway is isoprenoid biosynthesis; isopentenyl diphosphate biosynthesis via DXP pathway; isopentenyl diphosphate from 1-deoxy-D-xylulose 5-phosphate: step 4/6. Its function is as follows. Bifunctional enzyme that catalyzes the formation of 4-diphosphocytidyl-2-C-methyl-D-erythritol from CTP and 2-C-methyl-D-erythritol 4-phosphate (MEP) (IspD), and catalyzes the conversion of 4-diphosphocytidyl-2-C-methyl-D-erythritol 2-phosphate (CDP-ME2P) to 2-C-methyl-D-erythritol 2,4-cyclodiphosphate (ME-CPP) with a corresponding release of cytidine 5-monophosphate (CMP) (IspF). This chain is Bifunctional enzyme IspD/IspF, found in Sulfurimonas denitrificans (strain ATCC 33889 / DSM 1251) (Thiomicrospira denitrificans (strain ATCC 33889 / DSM 1251)).